The following is an 85-amino-acid chain: Neurotoxin BmKAEP2 (85 aa).

An N-terminal signal peptide occupies residues methionine 1–alanine 21. The LCN-type CS-alpha/beta domain maps to aspartate 22–glycine 82. 4 cysteine pairs are disulfide-bonded: cysteine 31–cysteine 81, cysteine 35–cysteine 56, cysteine 42–cysteine 63, and cysteine 46–cysteine 65.

This sequence belongs to the long (4 C-C) scorpion toxin superfamily. Sodium channel inhibitor family. Beta subfamily. In terms of tissue distribution, expressed by the venom gland.

It localises to the secreted. Functionally, depressant insect beta-toxins cause a transient contraction paralysis followed by a slow flaccid paralysis. They bind voltage-independently at site-4 of sodium channels (Nav) and shift the voltage of activation toward more negative potentials thereby affecting sodium channel activation and promoting spontaneous and repetitive firing. This toxin is active only on insects. Has potential anti-epilepsy effect. The protein is Neurotoxin BmKAEP2 of Olivierus martensii (Manchurian scorpion).